A 118-amino-acid chain; its full sequence is Large ribosomal subunit protein uL24 (118 aa).

Belongs to the universal ribosomal protein uL24 family. In terms of assembly, part of the 50S ribosomal subunit.

Functionally, one of two assembly initiator proteins, it binds directly to the 5'-end of the 23S rRNA, where it nucleates assembly of the 50S subunit. One of the proteins that surrounds the polypeptide exit tunnel on the outside of the subunit. In Prochlorococcus marinus (strain MIT 9313), this protein is Large ribosomal subunit protein uL24.